Reading from the N-terminus, the 350-residue chain is uncharacterized protein (350 aa).

The first 26 residues, 1–26 (MKKSGWLVVALIALVVLGVVTSIAVN), serve as a signal peptide directing secretion.

This is an uncharacterized protein from Archaeoglobus fulgidus (strain ATCC 49558 / DSM 4304 / JCM 9628 / NBRC 100126 / VC-16).